A 484-amino-acid polypeptide reads, in one-letter code: ATP synthase subunit beta (484 aa).

Residue Gly-169 to Thr-176 participates in ATP binding.

It belongs to the ATPase alpha/beta chains family. As to quaternary structure, F-type ATPases have 2 components, CF(1) - the catalytic core - and CF(0) - the membrane proton channel. CF(1) has five subunits: alpha(3), beta(3), gamma(1), delta(1), epsilon(1). CF(0) has three main subunits: a(1), b(2) and c(9-12). The alpha and beta chains form an alternating ring which encloses part of the gamma chain. CF(1) is attached to CF(0) by a central stalk formed by the gamma and epsilon chains, while a peripheral stalk is formed by the delta and b chains.

Its subcellular location is the cell membrane. The catalysed reaction is ATP + H2O + 4 H(+)(in) = ADP + phosphate + 5 H(+)(out). In terms of biological role, produces ATP from ADP in the presence of a proton gradient across the membrane. The catalytic sites are hosted primarily by the beta subunits. The sequence is that of ATP synthase subunit beta from Cutibacterium acnes (strain DSM 16379 / KPA171202) (Propionibacterium acnes).